We begin with the raw amino-acid sequence, 277 residues long: Thymidylate synthase (277 aa).

Position 21 (Arg-21) interacts with dUMP. His-51 lines the (6R)-5,10-methylene-5,6,7,8-tetrahydrofolate pocket. 139–140 (RR) contributes to the dUMP binding site. The Nucleophile role is filled by Cys-159. DUMP contacts are provided by residues 179–182 (RSAD), Asn-190, and 220–222 (HIY). Asp-182 contacts (6R)-5,10-methylene-5,6,7,8-tetrahydrofolate. Ala-276 provides a ligand contact to (6R)-5,10-methylene-5,6,7,8-tetrahydrofolate.

The protein belongs to the thymidylate synthase family. Bacterial-type ThyA subfamily. As to quaternary structure, homodimer.

Its subcellular location is the cytoplasm. It catalyses the reaction dUMP + (6R)-5,10-methylene-5,6,7,8-tetrahydrofolate = 7,8-dihydrofolate + dTMP. Its pathway is pyrimidine metabolism; dTTP biosynthesis. In terms of biological role, catalyzes the reductive methylation of 2'-deoxyuridine-5'-monophosphate (dUMP) to 2'-deoxythymidine-5'-monophosphate (dTMP) while utilizing 5,10-methylenetetrahydrofolate (mTHF) as the methyl donor and reductant in the reaction, yielding dihydrofolate (DHF) as a by-product. This enzymatic reaction provides an intracellular de novo source of dTMP, an essential precursor for DNA biosynthesis. The sequence is that of Thymidylate synthase from Roseobacter denitrificans (strain ATCC 33942 / OCh 114) (Erythrobacter sp. (strain OCh 114)).